A 100-amino-acid chain; its full sequence is Urease subunit gamma (100 aa).

Belongs to the urease gamma subunit family. Heterotrimer of UreA (gamma), UreB (beta) and UreC (alpha) subunits. Three heterotrimers associate to form the active enzyme.

It localises to the cytoplasm. The catalysed reaction is urea + 2 H2O + H(+) = hydrogencarbonate + 2 NH4(+). It functions in the pathway nitrogen metabolism; urea degradation; CO(2) and NH(3) from urea (urease route): step 1/1. This chain is Urease subunit gamma, found in Staphylococcus aureus (strain N315).